The sequence spans 294 residues: Single-stranded nucleic acid-binding protein (294 aa).

Positions methionine 1–lysine 30 are disordered. Serine 2 is modified (N-acetylserine). 2 positions are modified to phosphoserine: serine 2 and serine 16. The segment covering asparagine 10–arginine 25 has biased composition (polar residues). One can recognise an RRM 1 domain in the interval aspartate 37–threonine 119. At threonine 49 the chain carries Phosphothreonine. Serine 66 is subject to Phosphoserine. Phosphothreonine is present on residues threonine 91 and threonine 119. Arginine 125 bears the Omega-N-methylarginine mark. The tract at residues arginine 131–glycine 151 is RNA-binding RGG-box. Residues arginine 135, arginine 137, and arginine 141 each carry the dimethylated arginine modification. Arginine 145 bears the Dimethylated arginine; alternate mark. Arginine 145 carries the omega-N-methylarginine; alternate modification. Arginine 149 carries the omega-N-methylarginine modification. Over residues glycine 151–asparagine 169 the composition is skewed to gly residues. Positions glycine 151–glutamine 171 are disordered. A dimethylated arginine mark is found at arginine 153, arginine 155, and arginine 159. Arginine 161 and arginine 165 each carry dimethylated arginine; alternate. Arginine 161 and arginine 165 each carry omega-N-methylarginine; alternate. Residues aspartate 186 to isoleucine 274 enclose the RRM 2 domain. Position 242 is a phosphothreonine (threonine 242). Serine 244 carries the post-translational modification Phosphoserine. Positions arginine 275–glutamate 294 are disordered. The span at asparagine 278–glycine 288 shows a compositional bias: acidic residues. Threonine 287 bears the Phosphothreonine mark. Serine 289 carries the phosphoserine modification.

The protein belongs to the RRM GAR family. In terms of assembly, associated with snR10 and snR11 small nuclear RNAs.

It is found in the cytoplasm. Its subcellular location is the nucleus. The protein resides in the nucleolus. It localises to the P-body. The protein localises to the stress granule. Its function is as follows. Functions in the transition of mRNAs from translation to an mRNP complex destined for decapping. High-copy-number suppressor of decapping defects. Overexpression suppresses decapping defects in both DCP1-2 and DCP2-7 mutations. Acts to promote translational repression of mRNA in conjunction with DHH1 and subsequent mRNA localization to P bodies. Promotes translational repression of mRNA during glucose deprivation. This is Single-stranded nucleic acid-binding protein (SBP1) from Saccharomyces cerevisiae (strain ATCC 204508 / S288c) (Baker's yeast).